We begin with the raw amino-acid sequence, 829 residues long: Receptor-type tyrosine-protein phosphatase alpha (829 aa).

The N-terminal stretch at 1-19 is a signal peptide; the sequence is MDSWFILVLFGSGLIHVSA. Topologically, residues 20-142 are extracellular; sequence NNATTVSPSL…ETFPPADETP (123 aa). Residues Asn21, Asn47, Asn51, Asn68, Asn80, Asn86, Asn104, and Asn124 are each glycosylated (N-linked (GlcNAc...) asparagine). Positions 79–106 are disordered; the sequence is VNSSHSDNGTRRAASTESGGTTISPNGS. Residues 143–166 traverse the membrane as a helical segment; sequence IIAVMVALSSLLVIVFIIIVLYML. At 167-829 the chain is on the cytoplasmic side; the sequence is RFKKYKQAGS…DAFSDYANFK (663 aa). 2 positions are modified to phosphoserine: Ser202 and Ser204. Tyrosine-protein phosphatase domains lie at 232–528 and 560–818; these read FREE…LLEH and LEEE…VQEY. Substrate is bound by residues Asp437, 469–475, and Gln513; that span reads CSAGVGR. Catalysis depends on Cys469, which acts as the Phosphocysteine intermediate. Cys759 (phosphocysteine intermediate) is an active-site residue. A Phosphotyrosine modification is found at Tyr825.

Belongs to the protein-tyrosine phosphatase family. Receptor class 4 subfamily. As to quaternary structure, part of a complex comprised of PTPRA, BCAR1, BCAR3 (via SH2 domain), and SRC. Within the complex, interacts (when phosphorylated on Tyr-825) with BCAR3 (via SH2 domain). Interacts with GRB2. Integrin binding to extracellular matrix induces phosphorylation at Tyr-825 which induces PTPRA localization and recruitment of BCAR3, BCAR1 and CRK to focal adhesions. As to expression, widely expressed. Highest expression in brain and kidney.

The protein localises to the cell membrane. Its subcellular location is the cell junction. The protein resides in the focal adhesion. It carries out the reaction O-phospho-L-tyrosyl-[protein] + H2O = L-tyrosyl-[protein] + phosphate. Functionally, tyrosine protein phosphatase which is involved in integrin-mediated focal adhesion formation. Following integrin engagement, specifically recruits BCAR3, BCAR1 and CRK to focal adhesions thereby promoting SRC-mediated phosphorylation of BRAC1 and the subsequent activation of PAK and small GTPase RAC1 and CDC42. This is Receptor-type tyrosine-protein phosphatase alpha (Ptpra) from Mus musculus (Mouse).